The sequence spans 208 residues: ATP-dependent Clp protease proteolytic subunit (208 aa).

Ser-107 (nucleophile) is an active-site residue. His-132 is a catalytic residue.

The protein belongs to the peptidase S14 family. Fourteen ClpP subunits assemble into 2 heptameric rings which stack back to back to give a disk-like structure with a central cavity, resembling the structure of eukaryotic proteasomes.

The protein localises to the cytoplasm. It carries out the reaction Hydrolysis of proteins to small peptides in the presence of ATP and magnesium. alpha-casein is the usual test substrate. In the absence of ATP, only oligopeptides shorter than five residues are hydrolyzed (such as succinyl-Leu-Tyr-|-NHMec, and Leu-Tyr-Leu-|-Tyr-Trp, in which cleavage of the -Tyr-|-Leu- and -Tyr-|-Trp bonds also occurs).. Its function is as follows. Cleaves peptides in various proteins in a process that requires ATP hydrolysis. Has a chymotrypsin-like activity. Plays a major role in the degradation of misfolded proteins. This is ATP-dependent Clp protease proteolytic subunit from Methylorubrum extorquens (strain CM4 / NCIMB 13688) (Methylobacterium extorquens).